We begin with the raw amino-acid sequence, 181 residues long: Lysozyme C (181 aa).

An N-terminal signal peptide occupies residues 1 to 19 (MRIAFFLLILSIIVGLAYG). The propeptide occupies 139-181 (LTDSRPLGPFNVTEEEMDQLFIDHEIAMAQCEAEKTCNGFDLE).

This sequence belongs to the dictyostelium lysozyme family. Contains six disulfide bonds.

Its subcellular location is the cytoplasmic vesicle lumen. It catalyses the reaction Hydrolysis of (1-&gt;4)-beta-linkages between N-acetylmuramic acid and N-acetyl-D-glucosamine residues in a peptidoglycan and between N-acetyl-D-glucosamine residues in chitodextrins.. Its function is as follows. Has antibacterial activity. This Dictyostelium discoideum (Social amoeba) protein is Lysozyme C (alyC).